The chain runs to 341 residues: MEDDFDIRDARMPENEREYENVLRPLSLRDFSGQAKVVENLKVFVMAARMRKEALDHVLLHGPPGLGKTTLSNIIANELGVGFKVTSGPVLDKPGDLAGVLTSLEKNDVLFIDEIHRLSPIVEEYLYSAMEDYRIDIVIDKGPSARSIQIDLAPFTLIGATTRSGLLTSPLRARFGINMHLEYYDMETLTKIVLRSANILNVKCELNAAREIASRSRGTPRIANALLRRVRDFAQVKGNGDIDKAIACFSLEALNIDRYGLDQIDNKLLTTIIDKFKGGPVGLTTIATALGEDPGTLEEVYEPFLIKEGFIKRTPRGREVTDLAYTHLGRSRVGEQGFLFD.

The tract at residues 3–184 (DDFDIRDARM…FGINMHLEYY (182 aa)) is large ATPase domain (RuvB-L). ATP contacts are provided by residues leucine 23, arginine 24, glycine 65, lysine 68, threonine 69, threonine 70, 131-133 (EDY), arginine 174, tyrosine 184, and arginine 221. Residue threonine 69 participates in Mg(2+) binding. A small ATPAse domain (RuvB-S) region spans residues 185–255 (DMETLTKIVL…IACFSLEALN (71 aa)). The head domain (RuvB-H) stretch occupies residues 258–341 (RYGLDQIDNK…RVGEQGFLFD (84 aa)). Residues arginine 313 and arginine 318 each contribute to the DNA site.

It belongs to the RuvB family. As to quaternary structure, homohexamer. Forms an RuvA(8)-RuvB(12)-Holliday junction (HJ) complex. HJ DNA is sandwiched between 2 RuvA tetramers; dsDNA enters through RuvA and exits via RuvB. An RuvB hexamer assembles on each DNA strand where it exits the tetramer. Each RuvB hexamer is contacted by two RuvA subunits (via domain III) on 2 adjacent RuvB subunits; this complex drives branch migration. In the full resolvosome a probable DNA-RuvA(4)-RuvB(12)-RuvC(2) complex forms which resolves the HJ.

The protein resides in the cytoplasm. It carries out the reaction ATP + H2O = ADP + phosphate + H(+). In terms of biological role, the RuvA-RuvB-RuvC complex processes Holliday junction (HJ) DNA during genetic recombination and DNA repair, while the RuvA-RuvB complex plays an important role in the rescue of blocked DNA replication forks via replication fork reversal (RFR). RuvA specifically binds to HJ cruciform DNA, conferring on it an open structure. The RuvB hexamer acts as an ATP-dependent pump, pulling dsDNA into and through the RuvAB complex. RuvB forms 2 homohexamers on either side of HJ DNA bound by 1 or 2 RuvA tetramers; 4 subunits per hexamer contact DNA at a time. Coordinated motions by a converter formed by DNA-disengaged RuvB subunits stimulates ATP hydrolysis and nucleotide exchange. Immobilization of the converter enables RuvB to convert the ATP-contained energy into a lever motion, pulling 2 nucleotides of DNA out of the RuvA tetramer per ATP hydrolyzed, thus driving DNA branch migration. The RuvB motors rotate together with the DNA substrate, which together with the progressing nucleotide cycle form the mechanistic basis for DNA recombination by continuous HJ branch migration. Branch migration allows RuvC to scan DNA until it finds its consensus sequence, where it cleaves and resolves cruciform DNA. The sequence is that of Holliday junction branch migration complex subunit RuvB from Parabacteroides distasonis (strain ATCC 8503 / DSM 20701 / CIP 104284 / JCM 5825 / NCTC 11152).